The sequence spans 210 residues: ATP-dependent Clp protease proteolytic subunit (210 aa).

Catalysis depends on S114, which acts as the Nucleophile. Residue H139 is part of the active site.

It belongs to the peptidase S14 family. In terms of assembly, fourteen ClpP subunits assemble into 2 heptameric rings which stack back to back to give a disk-like structure with a central cavity, resembling the structure of eukaryotic proteasomes.

It localises to the cytoplasm. It catalyses the reaction Hydrolysis of proteins to small peptides in the presence of ATP and magnesium. alpha-casein is the usual test substrate. In the absence of ATP, only oligopeptides shorter than five residues are hydrolyzed (such as succinyl-Leu-Tyr-|-NHMec, and Leu-Tyr-Leu-|-Tyr-Trp, in which cleavage of the -Tyr-|-Leu- and -Tyr-|-Trp bonds also occurs).. Its function is as follows. Cleaves peptides in various proteins in a process that requires ATP hydrolysis. Has a chymotrypsin-like activity. Plays a major role in the degradation of misfolded proteins. The chain is ATP-dependent Clp protease proteolytic subunit from Janthinobacterium sp. (strain Marseille) (Minibacterium massiliensis).